The chain runs to 129 residues: Small ribosomal subunit protein uS11 (129 aa).

It belongs to the universal ribosomal protein uS11 family. As to quaternary structure, part of the 30S ribosomal subunit. Interacts with proteins S7 and S18. Binds to IF-3.

Located on the platform of the 30S subunit, it bridges several disparate RNA helices of the 16S rRNA. Forms part of the Shine-Dalgarno cleft in the 70S ribosome. In Paracoccus denitrificans (strain Pd 1222), this protein is Small ribosomal subunit protein uS11.